The chain runs to 495 residues: Putative aldehyde dehydrogenase AldA (495 aa).

212–218 lines the NAD(+) pocket; sequence GKGSESG. Catalysis depends on residues E256 and C290.

The protein belongs to the aldehyde dehydrogenase family.

The catalysed reaction is an aldehyde + NAD(+) + H2O = a carboxylate + NADH + 2 H(+). In Staphylococcus aureus (strain MRSA252), this protein is Putative aldehyde dehydrogenase AldA (aldA).